Here is a 129-residue protein sequence, read N- to C-terminus: Defensin-like protein 182 (129 aa).

A signal peptide spans 1–26 (METVTSLVFIVNLLIIFTSVVNQARG). Cystine bridges form between cysteine 29–cysteine 70, cysteine 36–cysteine 55, cysteine 39–cysteine 64, cysteine 43–cysteine 66, cysteine 83–cysteine 129, cysteine 94–cysteine 114, cysteine 99–cysteine 123, and cysteine 103–cysteine 125.

Belongs to the DEFL family.

It is found in the secreted. Functionally, confers broad-spectrum resistance to pathogens. This Arabidopsis thaliana (Mouse-ear cress) protein is Defensin-like protein 182 (PDF3.2).